The following is a 137-amino-acid chain: Methylglyoxal synthase (137 aa).

The 137-residue stretch at 1-137 (MKIALIAHDR…NIVHGRDRDA (137 aa)) folds into the MGS-like domain. Residues histidine 8, lysine 12, 34 to 37 (TGTT), and 54 to 55 (SG) each bind substrate. Catalysis depends on aspartate 60, which acts as the Proton donor/acceptor. Position 87 (histidine 87) interacts with substrate.

Belongs to the methylglyoxal synthase family.

It catalyses the reaction dihydroxyacetone phosphate = methylglyoxal + phosphate. Its function is as follows. Catalyzes the formation of methylglyoxal from dihydroxyacetone phosphate. This chain is Methylglyoxal synthase, found in Bacillus licheniformis (strain ATCC 14580 / DSM 13 / JCM 2505 / CCUG 7422 / NBRC 12200 / NCIMB 9375 / NCTC 10341 / NRRL NRS-1264 / Gibson 46).